The chain runs to 704 residues: Matrix metalloproteinase-9 (704 aa).

Residues 1–19 form the signal peptide; that stretch reads MSPRQPLVLVFLVLGCCSA. Positions 20–106 are cleaved as a propeptide — activation peptide; the sequence is APRPHKPTVV…PRCGVPDLGK (87 aa). N38 carries N-linked (GlcNAc...) asparagine glycosylation. The Cysteine switch motif lies at 97–104; sequence PRCGVPDL. C99 is a binding site for Zn(2+). Residue N127 is glycosylated (N-linked (GlcNAc...) asparagine). Residues D131 and D165 each coordinate Ca(2+). Zn(2+) is bound by residues H175 and D177. The Ca(2+) site is built by D182, G183, N185, and L187. H190 is a Zn(2+) binding site. Residues G197, Q199, and D201 each coordinate Ca(2+). H203 serves as a coordination point for Zn(2+). Ca(2+) is bound by residues D205, D206, and E208. Fibronectin type-II domains lie at 225–273, 283–331, and 342–390; these read ADGA…FCPS, GDGK…FCPT, and SAGE…FCPD. Disulfide bonds link C230-C256, C244-C271, C288-C314, C302-C329, C347-C373, and C361-C388. H401 is a binding site for Zn(2+). E402 is a catalytic residue. 2 residues coordinate Zn(2+): H405 and H411. The disordered stretch occupies residues 434 to 507; that stretch reads DDVRGIQHLY…PSEAPTVPVD (74 aa). Pro residues-rich tracts occupy residues 450-461 and 483-496; these read EPQPPTAPPTAP and TGPPAAGPTGPPTA. A disulfide bridge connects residues C513 and C701. Hemopexin repeat units follow at residues 515 to 560, 561 to 605, 607 to 654, and 655 to 701; these read VNIF…WPAL, PRKL…GLGP, VTQV…YPGV, and PLNT…ILQC.

It belongs to the peptidase M10A family. Exists as monomer or homodimer; disulfide-linked. Also exists as heterodimer with LCN2. Macrophages and transformed cell lines produce only the monomeric form. Interacts with ECM1. It depends on Zn(2+) as a cofactor. Ca(2+) serves as cofactor. In terms of processing, N- and O-glycosylated.

Its subcellular location is the secreted. It is found in the extracellular space. The protein resides in the extracellular matrix. It catalyses the reaction Cleavage of gelatin types I and V and collagen types IV and V.. In terms of biological role, matrix metalloproteinase that plays an essential role in local proteolysis of the extracellular matrix and in leukocyte migration. Could play a role in bone osteoclastic resorption. Cleaves KiSS1 at a Gly-|-Leu bond. Cleaves NINJ1 to generate the Secreted ninjurin-1 form. Cleaves type IV and type V collagen into large C-terminal three quarter fragments and shorter N-terminal one quarter fragments. Degrades fibronectin but not laminin or Pz-peptide. In Canis lupus familiaris (Dog), this protein is Matrix metalloproteinase-9 (MMP9).